A 387-amino-acid polypeptide reads, in one-letter code: ADP,ATP carrier protein 2, mitochondrial (387 aa).

Residues 1-77 (MADQANQPTV…PVMPTPLFAN (77 aa)) constitute a mitochondrion transit peptide. 3 Solcar repeats span residues 85-178 (KNFM…FKRL), 190-282 (KWFA…IKPV), and 290-376 (DNFF…LQIL). 5 helical membrane-spanning segments follow: residues 87 to 114 (FMIDFMMGGVSAAVSKTAAAPIERVKLL), 155 to 179 (TANVIRYFPTQALNFAFKDYFKRLF), 188 to 208 (YWKWFAGNLASGGAAGASSLF), 258 to 279 (FNISCVGIIVYRGLYFGLYDSI), and 293 to 313 (FASFALGWLITNGAGLASYPI). Arg-160 and Lys-172 together coordinate ADP. Arg-317 is a binding site for ADP. The segment at 317–322 (RRRMMM) is important for transport activity. The Nucleotide carrier signature motif signature appears at 317–322 (RRRMMM). The chain crosses the membrane as a helical span at residues 353-373 (AGANILRAIAGAGVLSGYDQL).

Belongs to the mitochondrial carrier (TC 2.A.29) family. As to quaternary structure, monomer.

It is found in the mitochondrion inner membrane. The catalysed reaction is ADP(in) + ATP(out) = ADP(out) + ATP(in). Its activity is regulated as follows. The matrix-open state (m-state) is inhibited by the membrane-permeable bongkrekic acid (BKA). The cytoplasmic-open state (c-state) is inhibited by the membrane-impermeable toxic inhibitor carboxyatractyloside (CATR). Functionally, ADP:ATP antiporter that mediates import of ADP into the mitochondrial matrix for ATP synthesis, and export of ATP out to fuel the cell. Cycles between the cytoplasmic-open state (c-state) and the matrix-open state (m-state): operates by the alternating access mechanism with a single substrate-binding site intermittently exposed to either the cytosolic (c-state) or matrix (m-state) side of the inner mitochondrial membrane. The sequence is that of ADP,ATP carrier protein 2, mitochondrial (ANT2) from Zea mays (Maize).